The sequence spans 363 residues: 3-isopropylmalate dehydrogenase (363 aa).

79–92 serves as a coordination point for NAD(+); the sequence is GPKWEHLPPNDQPE. Substrate contacts are provided by Arg100, Arg110, Arg139, and Asp228. Mg(2+) is bound by residues Asp228, Asp252, and Asp256. 286–298 serves as a coordination point for NAD(+); the sequence is GSAPDIAGKNIAN.

The protein belongs to the isocitrate and isopropylmalate dehydrogenases family. LeuB type 1 subfamily. As to quaternary structure, homodimer. It depends on Mg(2+) as a cofactor. Requires Mn(2+) as cofactor.

It is found in the cytoplasm. It carries out the reaction (2R,3S)-3-isopropylmalate + NAD(+) = 4-methyl-2-oxopentanoate + CO2 + NADH. It functions in the pathway amino-acid biosynthesis; L-leucine biosynthesis; L-leucine from 3-methyl-2-oxobutanoate: step 3/4. Catalyzes the oxidation of 3-carboxy-2-hydroxy-4-methylpentanoate (3-isopropylmalate) to 3-carboxy-4-methyl-2-oxopentanoate. The product decarboxylates to 4-methyl-2 oxopentanoate. The chain is 3-isopropylmalate dehydrogenase from Vibrio parahaemolyticus serotype O3:K6 (strain RIMD 2210633).